The following is a 111-amino-acid chain: Prothymosin alpha-A (111 aa).

Positions methionine 1–aspartate 111 are disordered. Residues serine 9–asparagine 42 show a composition bias toward basic and acidic residues. Composition is skewed to acidic residues over residues glutamate 43–glutamate 81 and glutamate 90–valine 100. Over residues glutamate 101–aspartate 111 the composition is skewed to basic and acidic residues.

The protein belongs to the pro/parathymosin family.

It localises to the nucleus. The polypeptide is Prothymosin alpha-A (ptma-a) (Xenopus laevis (African clawed frog)).